The sequence spans 95 residues: Mitochondrial import inner membrane translocase subunit Tim13 (95 aa).

Residue Met1 is modified to N-acetylmethionine. Ser7 is modified (phosphoserine). Residues 46–69 (CFRKCIGKPGGSLDNSEQKCIAMC) carry the Twin CX3C motif motif. 2 disulfide bridges follow: Cys46–Cys69 and Cys50–Cys65. Position 53 is an N6-succinyllysine (Lys53).

Belongs to the small Tim family. Heterohexamer; composed of 3 copies of TIMM8 (TIMM8A or TIMM8B) and 3 copies of TIMM13, named soluble 70 kDa complex. Associates with the TIM22 complex, whose core is composed of TIMM22. As to expression, present at high level in liver and brain, and at lower level in muscle and heart. In CNS sections, it is predominantly present in the soma and the dendritic portion of the Purkinje cells of the cerebellum, but not in the glial cells. Scattered expression also is also detected in the brain stem, olfactory bulb, substantia nigra, hippocampus and striatum (at protein level).

It is found in the mitochondrion inner membrane. Mitochondrial intermembrane chaperone that participates in the import and insertion of some multi-pass transmembrane proteins into the mitochondrial inner membrane. Also required for the transfer of beta-barrel precursors from the TOM complex to the sorting and assembly machinery (SAM complex) of the outer membrane. Acts as a chaperone-like protein that protects the hydrophobic precursors from aggregation and guide them through the mitochondrial intermembrane space. The TIMM8-TIMM13 complex mediates the import of proteins such as TIMM23, SLC25A12/ARALAR1 and SLC25A13/ARALAR2, while the predominant TIMM9-TIMM10 70 kDa complex mediates the import of much more proteins. In Mus musculus (Mouse), this protein is Mitochondrial import inner membrane translocase subunit Tim13 (Timm13).